The primary structure comprises 224 residues: EF-hand calcium-binding domain-containing protein 1 (224 aa).

The signal sequence occupies residues 1–21 (MKVSLLLLALVLVCLVQGSES). Residues 115-150 (IAHPDFMKAYSIADVDGDGELSPKEFYNGPYVFEMD) enclose the EF-hand domain. The Ca(2+) site is built by D128, D130, D132, E134, and E139.

As to expression, component of the acid-soluble organic matrix of calcified layers of the shell (at protein level).

The protein resides in the secreted. In Lottia gigantea (Giant owl limpet), this protein is EF-hand calcium-binding domain-containing protein 1.